Here is a 361-residue protein sequence, read N- to C-terminus: Fructose-bisphosphate aldolase (361 aa).

Position 63 (S63) interacts with D-glyceraldehyde 3-phosphate. D110 functions as the Proton donor in the catalytic mechanism. H111, D145, E175, and H227 together coordinate Zn(2+). G228 provides a ligand contact to dihydroxyacetone phosphate. H266 serves as a coordination point for Zn(2+). Residues 267–269 (GGS) and 288–291 (NLDT) contribute to the dihydroxyacetone phosphate site.

Belongs to the class II fructose-bisphosphate aldolase family. Homodimer. The cofactor is Zn(2+).

It carries out the reaction beta-D-fructose 1,6-bisphosphate = D-glyceraldehyde 3-phosphate + dihydroxyacetone phosphate. It functions in the pathway carbohydrate degradation; glycolysis; D-glyceraldehyde 3-phosphate and glycerone phosphate from D-glucose: step 4/4. Catalyzes the aldol condensation of dihydroxyacetone phosphate (DHAP or glycerone-phosphate) with glyceraldehyde 3-phosphate (G3P) to form fructose 1,6-bisphosphate (FBP) in gluconeogenesis and the reverse reaction in glycolysis. This is Fructose-bisphosphate aldolase (FBA1) from Kluyveromyces lactis (strain ATCC 8585 / CBS 2359 / DSM 70799 / NBRC 1267 / NRRL Y-1140 / WM37) (Yeast).